Consider the following 436-residue polypeptide: MPNLYLVSLGCNKNLVDSEIMLGRLSSYNIVDKPNNADVMIVNTCGFIESAKEESVRTILELASYKKENSVLVVTGCLMQRYRDELMKELPEVDIFTGVGDYASIDEMILKKQNLFSPGVYLQKSDTKRVITGSSYHAYIKIAEGCNQKCSFCAIPTFKGKLKSRDINSIIKEVKELTKDGYSDFSFIAQDTSSFLRDAGINDGLIKLIDEVEKIEAVKSARILYLYPTTASMGLIDKIIASPKFVNYFDMPIQHINDDMLKIMRRGSSKERLKELLTKMRVAPKSFLRTGIIIGHPGETGERFDELCDFLTEFKFDRISAFAYSKEEGTLAYEMEQIPSKTITKRLNTIEKIIKKQIEGSFKSLVGEVIKVQINGSSSEGEMFFGAKSIIWDREIDGEILINDTQIKDPKVGEIYDCKINEFVKDKLIGEIICNS.

One can recognise an MTTase N-terminal domain in the interval 2–114; that stretch reads PNLYLVSLGC…IDEMILKKQN (113 aa). Residues C11, C45, C77, C146, C150, and C153 each coordinate [4Fe-4S] cluster. In terms of domain architecture, Radical SAM core spans 132-363; the sequence is TGSSYHAYIK…IKKQIEGSFK (232 aa). Residues 363-434 enclose the TRAM domain; the sequence is KSLVGEVIKV…KDKLIGEIIC (72 aa).

This sequence belongs to the methylthiotransferase family. RimO subfamily. It depends on [4Fe-4S] cluster as a cofactor.

It localises to the cytoplasm. The catalysed reaction is L-aspartate(89)-[ribosomal protein uS12]-hydrogen + (sulfur carrier)-SH + AH2 + 2 S-adenosyl-L-methionine = 3-methylsulfanyl-L-aspartate(89)-[ribosomal protein uS12]-hydrogen + (sulfur carrier)-H + 5'-deoxyadenosine + L-methionine + A + S-adenosyl-L-homocysteine + 2 H(+). Functionally, catalyzes the methylthiolation of an aspartic acid residue of ribosomal protein uS12. The chain is Ribosomal protein uS12 methylthiotransferase RimO from Campylobacter fetus subsp. fetus (strain 82-40).